We begin with the raw amino-acid sequence, 209 residues long: MKKLKLKELESRLQEVDGFEKPKLLLEQYPTRPHIAACMLYTIHNTYDDIENKAVADLGCGCGVLSIGAAMLGAGLCVGFDIDEDALEIFNKNVEEFELTNVDMIQCDVYSLSNRMSKLFDTVIMNPPFGTKNNKGTDMAFLKTALGMARTAVYSLHKSSTREHIQKKAAEWKVKIEIIAELRYDLPALYNFHKKKSVDIEVDLIRFSF.

Residues glutamine 28, threonine 31, glycine 59, cysteine 62, valine 64, aspartate 81, and 108-109 (DV) each bind S-adenosyl-L-methionine.

The protein belongs to the methyltransferase superfamily. PrmA family. In terms of assembly, heterodimer; heterodimerizes with TRMT112. In terms of tissue distribution, ubiquitously expressed in brain.

It localises to the nucleus. The protein resides in the presynapse. Its subcellular location is the postsynapse. It catalyses the reaction adenosine(1832) in 18S rRNA + S-adenosyl-L-methionine = N(6)-methyladenosine(1832) in 18S rRNA + S-adenosyl-L-homocysteine + H(+). With respect to regulation, rRNA N6-adenosine-methyltransferase activity is inhibited by zinc. In terms of biological role, catalytic subunit of a heterodimer with TRMT112, which specifically methylates the 6th position of adenine in position 1832 of 18S rRNA. N6-methylation of adenine(1832) in 18S rRNA resides in the decoding center of 18S rRNA and is required for translation and embryonic stem cells (ESCs) pluripotency and differentiation. The sequence is that of rRNA N(6)-adenosine-methyltransferase METTL5 from Mus musculus (Mouse).